A 293-amino-acid polypeptide reads, in one-letter code: Sodium-type flagellar protein MotY (293 aa).

The N-terminal stretch at 1–21 (MNKWLITSGVMLSLLSANSYA) is a signal peptide. The OmpA-like domain occupies 175–292 (YSFEDIAFTI…RVVISLGRTQ (118 aa)).

The protein resides in the cell membrane. May play the role of a stator in the sodium flagellar motor, stabilizing the force-generating unit through direct interaction with the cell wall. The chain is Sodium-type flagellar protein MotY from Vibrio parahaemolyticus serotype O3:K6 (strain RIMD 2210633).